The chain runs to 78 residues: MSRKCQLTGKKANNGYSVSHSHIRTHKLQHANLQWKKVWWPQGKKWVKLKLSTKAIKTLQSKGIQAMAKQAGIDLNKF.

This sequence belongs to the bacterial ribosomal protein bL28 family.

The polypeptide is Large ribosomal subunit protein bL28 (Trichodesmium erythraeum (strain IMS101)).